The sequence spans 120 residues: Large ribosomal subunit protein uL18 (120 aa).

It belongs to the universal ribosomal protein uL18 family. In terms of assembly, part of the 50S ribosomal subunit; part of the 5S rRNA/L5/L18/L25 subcomplex. Contacts the 5S and 23S rRNAs.

Functionally, this is one of the proteins that bind and probably mediate the attachment of the 5S RNA into the large ribosomal subunit, where it forms part of the central protuberance. In Macrococcus caseolyticus (strain JCSC5402) (Macrococcoides caseolyticum), this protein is Large ribosomal subunit protein uL18.